The primary structure comprises 225 residues: Thymidine kinase (225 aa).

8 to 15 (GPMFSGKT) lines the ATP pocket. The active-site Proton acceptor is Glu-92. Tyr-122 is a substrate binding site. Zn(2+) is bound by residues Cys-147 and Cys-150. Substrate is bound at residue 167–171 (KILVG). Residues Cys-180 and Cys-183 each coordinate Zn(2+). Positions 197-207 (SEQINNQTELS) are enriched in polar residues. Positions 197 to 225 (SEQINNQTELSEPTRQKESLKIKKRRIDS) are disordered. Over residues 208–225 (EPTRQKESLKIKKRRIDS) the composition is skewed to basic and acidic residues.

The protein belongs to the thymidine kinase family.

It catalyses the reaction thymidine + ATP = dTMP + ADP + H(+). The sequence is that of Thymidine kinase (TK) from Acanthamoeba polyphaga mimivirus (APMV).